The primary structure comprises 610 residues: Protein mono-ADP-ribosyltransferase PARP6 (610 aa).

Positions glutamate 374–methionine 600 constitute a PARP catalytic domain. Aspartate 580 carries the ADP-ribosyl aspartic acid modification.

Belongs to the ARTD/PARP family. Auto-mono-ADP-ribosylated.

It carries out the reaction L-aspartyl-[protein] + NAD(+) = 4-O-(ADP-D-ribosyl)-L-aspartyl-[protein] + nicotinamide. The catalysed reaction is L-cysteinyl-[protein] + NAD(+) = S-(ADP-D-ribosyl)-L-cysteinyl-[protein] + nicotinamide + H(+). Functionally, mono-ADP-ribosyltransferase that mediates mono-ADP-ribosylation of target proteins. This Pongo abelii (Sumatran orangutan) protein is Protein mono-ADP-ribosyltransferase PARP6.